The following is a 250-amino-acid chain: Ribosomal RNA small subunit methyltransferase J (250 aa).

Residues 96–97 (RD) and aspartate 168 contribute to the S-adenosyl-L-methionine site.

Belongs to the methyltransferase superfamily. RsmJ family.

It localises to the cytoplasm. The enzyme catalyses guanosine(1516) in 16S rRNA + S-adenosyl-L-methionine = N(2)-methylguanosine(1516) in 16S rRNA + S-adenosyl-L-homocysteine + H(+). Specifically methylates the guanosine in position 1516 of 16S rRNA. The chain is Ribosomal RNA small subunit methyltransferase J from Neisseria meningitidis serogroup C / serotype 2a (strain ATCC 700532 / DSM 15464 / FAM18).